The sequence spans 283 residues: Cyclin-C (283 aa).

Positions 46–144 (NVIQALGEHL…ILECEFYLLE (99 aa)) constitute a Cyclin N-terminal domain. The disordered stretch occupies residues 252-283 (SILSKMPKPKPPPNSDGEQGTNGSQSSGYSQS). Residues 267 to 283 (DGEQGTNGSQSSGYSQS) are compositionally biased toward polar residues.

This sequence belongs to the cyclin family. Cyclin C subfamily. Component of the Mediator complex. The cylin/CDK pair formed by ccnc/cdk8 also associates with the large subunit of RNA polymerase II.

Its subcellular location is the nucleus. Its function is as follows. Component of the Mediator complex, a coactivator involved in regulated gene transcription of nearly all RNA polymerase II-dependent genes. Mediator functions as a bridge to convey information from gene-specific regulatory proteins to the basal RNA polymerase II transcription machinery. Mediator is recruited to promoters by direct interactions with regulatory proteins and serves as a scaffold for the assembly of a functional preinitiation complex with RNA polymerase II and the general transcription factors. Binds to and activates cyclin-dependent kinase cdk8 that phosphorylates the CTD (C-terminal domain) of the large subunit of RNA polymerase II (RNAp II), which may inhibit the formation of a transcription initiation complex. In Xenopus laevis (African clawed frog), this protein is Cyclin-C (ccnc).